A 403-amino-acid chain; its full sequence is Acetyl-CoA acetyltransferase IA (403 aa).

The active-site Acyl-thioester intermediate is the cysteine 91. Catalysis depends on proton acceptor residues histidine 353 and cysteine 383. Positions 401 to 403 (AKL) match the Microbody targeting signal motif.

This sequence belongs to the thiolase-like superfamily. Thiolase family. In terms of assembly, multimeric.

Its subcellular location is the peroxisome. It catalyses the reaction 2 acetyl-CoA = acetoacetyl-CoA + CoA. Its pathway is metabolic intermediate biosynthesis; (R)-mevalonate biosynthesis; (R)-mevalonate from acetyl-CoA: step 1/3. This Candida tropicalis (Yeast) protein is Acetyl-CoA acetyltransferase IA (PACTA).